Reading from the N-terminus, the 65-residue chain is MPKMKTKKSAAKRFVVRPGGTVKRGQAFKRHILTKKTTKNKRHLRGATAVHDSDLNSVRAMLPFA.

This sequence belongs to the bacterial ribosomal protein bL35 family.

The chain is Large ribosomal subunit protein bL35 from Burkholderia ambifaria (strain MC40-6).